A 233-amino-acid polypeptide reads, in one-letter code: Protein-methionine-sulfoxide reductase heme-binding subunit MsrQ (233 aa).

6 consecutive transmembrane segments (helical) span residues 13–33 (IKAA…HGLW), 44–64 (ALTR…LCVS), 81–101 (MLGL…LWLD), 117–137 (PFIT…LTSS), 151–171 (SLHR…LWLV), and 174–194 (VALL…GWRV). The 115-residue stretch at 50 to 164 (GIWTLNFLFL…AVYAVAILGV (115 aa)) folds into the Ferric oxidoreductase domain.

This sequence belongs to the MsrQ family. In terms of assembly, heterodimer of a catalytic subunit (MsrP) and a heme-binding subunit (MsrQ).

Its subcellular location is the cell inner membrane. Part of the MsrPQ system that repairs oxidized periplasmic proteins containing methionine sulfoxide residues (Met-O), using respiratory chain electrons. Thus protects these proteins from oxidative-stress damage caused by reactive species of oxygen and chlorine generated by the host defense mechanisms. MsrPQ is essential for the maintenance of envelope integrity under bleach stress, rescuing a wide series of structurally unrelated periplasmic proteins from methionine oxidation. MsrQ provides electrons for reduction to the reductase catalytic subunit MsrP, using the quinone pool of the respiratory chain. Probably involved in protection against reactive chlorine species (RCS) generated by chlorite and hypochlorite. The chain is Protein-methionine-sulfoxide reductase heme-binding subunit MsrQ from Azospira oryzae (strain ATCC BAA-33 / DSM 13638 / PS) (Dechlorosoma suillum).